Reading from the N-terminus, the 515-residue chain is Bifunctional purine biosynthesis protein PurH (515 aa).

The 145-residue stretch at 1 to 145 (MTKRALISVS…KNHASVTVVV (145 aa)) folds into the MGS-like domain.

This sequence belongs to the PurH family.

The catalysed reaction is (6R)-10-formyltetrahydrofolate + 5-amino-1-(5-phospho-beta-D-ribosyl)imidazole-4-carboxamide = 5-formamido-1-(5-phospho-D-ribosyl)imidazole-4-carboxamide + (6S)-5,6,7,8-tetrahydrofolate. It catalyses the reaction IMP + H2O = 5-formamido-1-(5-phospho-D-ribosyl)imidazole-4-carboxamide. It participates in purine metabolism; IMP biosynthesis via de novo pathway; 5-formamido-1-(5-phospho-D-ribosyl)imidazole-4-carboxamide from 5-amino-1-(5-phospho-D-ribosyl)imidazole-4-carboxamide (10-formyl THF route): step 1/1. The protein operates within purine metabolism; IMP biosynthesis via de novo pathway; IMP from 5-formamido-1-(5-phospho-D-ribosyl)imidazole-4-carboxamide: step 1/1. This Streptococcus thermophilus (strain ATCC BAA-491 / LMD-9) protein is Bifunctional purine biosynthesis protein PurH.